Reading from the N-terminus, the 652-residue chain is Sodium-dependent phosphate transporter 1-A (652 aa).

Over 1–25 (MESTTLASLAAVSVLAAGAQTDMSD) the chain is Cytoplasmic. Residues 26-46 (VLWLLILGFVIAFILAFSVGA) form a helical membrane-spanning segment. Residues 47 to 66 (NDVANSFGTAVGSGVVTLRQ) lie on the Extracellular side of the membrane. A helical transmembrane segment spans residues 67–87 (ACILATIFETVGAMLLGAKVS). Residues 88-104 (ETIRSGIIDVHMYNGSE) are Cytoplasmic-facing. A helical membrane pass occupies residues 105-125 (AVLMAGSISAMFGSAVWQLAA). The Extracellular portion of the chain corresponds to 126–162 (SFLKLPISGTHCIVGATIGFSMVARGHQGVKWLELLR). A helical transmembrane segment spans residues 163-183 (IVASWFLSPLLSGIMSAVLFY). The Cytoplasmic portion of the chain corresponds to 184 to 201 (FVRKFILNKDDPVPNGLR). The chain crosses the membrane as a helical span at residues 202–222 (ALPVFYAVTMGINLFSIMFTG). Residues 223–234 (APMLGFDRIPWW) lie on the Extracellular side of the membrane. A helical membrane pass occupies residues 235–255 (GTLLISLGCAILTALVVWFIV). The Cytoplasmic segment spans residues 256 to 482 (CPRLKKKMQS…IDELEIDKPE (227 aa)). The disordered stretch occupies residues 278–308 (TQLVEKKPSSNGLMDHHPGPPRNYSPVPQTP). Basic and acidic residues predominate over residues 281–295 (VEKKPSSNGLMDHHP). Positions 297–308 (PPRNYSPVPQTP) are enriched in pro residues. A helical transmembrane segment spans residues 483–503 (VSTLFQFLQILTACFGSFAHG). The Extracellular segment spans residues 504 to 531 (GNDVSNAIGPLVALWLIYDSASVAPSAP). Residues 532–552 (TPIWLLLYGGVGICTGLWIWG) traverse the membrane as a helical segment. Residues 553-571 (RRVIQTMGKDLTPITPSSG) are Cytoplasmic-facing. A helical membrane pass occupies residues 572–592 (FSIELASAITVVVASNIGLPV). The Extracellular segment spans residues 593 to 621 (STTHCKVGSVVSVGWLRSRKAVDWHLFRN). Residues 622-642 (IFIAWFVTVPISGLISAAIMA) traverse the membrane as a helical segment. The Cytoplasmic portion of the chain corresponds to 643–652 (LFYYVILPLT).

Belongs to the inorganic phosphate transporter (PiT) (TC 2.A.20) family.

The protein resides in the membrane. Functionally, sodium-phosphate symporter which plays a fundamental housekeeping role in phosphate transport. The protein is Sodium-dependent phosphate transporter 1-A (slc20a1a) of Danio rerio (Zebrafish).